Here is a 55-residue protein sequence, read N- to C-terminus: Large ribosomal subunit protein uL30 (55 aa).

Belongs to the universal ribosomal protein uL30 family. In terms of assembly, part of the 50S ribosomal subunit.

Its function is as follows. Binds the 5S and 23S rRNAs. The protein is Large ribosomal subunit protein uL30 of Deinococcus radiodurans (strain ATCC 13939 / DSM 20539 / JCM 16871 / CCUG 27074 / LMG 4051 / NBRC 15346 / NCIMB 9279 / VKM B-1422 / R1).